Here is a 459-residue protein sequence, read N- to C-terminus: Glycosyl hydrolase family 109 protein (459 aa).

Positions 1 to 31 (MHNIHRRNFLKAAGAATAGLVTANIALNAYA) form a signal peptide, tat-type signal. NAD(+)-binding positions include 64 to 65 (ER), Asp86, 135 to 138 (WEWH), 155 to 156 (EV), and Asn184. Substrate-binding positions include Tyr213, Arg232, 244 to 247 (YPTH), and Tyr326. Tyr244 provides a ligand contact to NAD(+).

This sequence belongs to the Gfo/Idh/MocA family. Glycosyl hydrolase 109 subfamily. NAD(+) serves as cofactor. In terms of processing, predicted to be exported by the Tat system. The position of the signal peptide cleavage has not been experimentally proven.

In terms of biological role, glycosidase. The sequence is that of Glycosyl hydrolase family 109 protein from Shewanella baltica (strain OS195).